The sequence spans 202 residues: Ribonuclease HII (202 aa).

Residues Thr-18–Gln-202 form the RNase H type-2 domain. The a divalent metal cation site is built by Asp-24, Glu-25, and Asp-116.

It belongs to the RNase HII family. Mn(2+) is required as a cofactor. The cofactor is Mg(2+).

Its subcellular location is the cytoplasm. It catalyses the reaction Endonucleolytic cleavage to 5'-phosphomonoester.. Its function is as follows. Endonuclease that specifically degrades the RNA of RNA-DNA hybrids. This chain is Ribonuclease HII, found in Acholeplasma laidlawii (strain PG-8A).